The sequence spans 602 residues: Carbon catabolite repressor protein 4 homolog 1 (602 aa).

The disordered stretch occupies residues 113 to 136; sequence ASAATEGNDEEELPRLNSSGSGSG. Mg(2+) is bound at residue E299.

Belongs to the CCR4/nocturin family. Component of the CCR4-NOT complex, at least composed of CRR4 and CAF1 proteins. Mg(2+) is required as a cofactor.

It localises to the nucleus. Its subcellular location is the cytoplasm. It carries out the reaction Exonucleolytic cleavage of poly(A) to 5'-AMP.. In terms of biological role, acts as a catalytic component of the CCR4-NOT core complex, which in the nucleus seems to be a general transcription factor, and in the cytoplasm the major mRNA deadenylase involved in mRNA turnover. The sequence is that of Carbon catabolite repressor protein 4 homolog 1 (CCR4-1) from Arabidopsis thaliana (Mouse-ear cress).